The following is a 346-amino-acid chain: Peripherin-2 (346 aa).

Over 1-24 (MALLKVKFDQKKRVKLAQGLWLMN) the chain is Cytoplasmic. Residues 25–43 (WLSVLAGIVLFSLGLFLKI) traverse the membrane as a helical segment. Residues 44 to 61 (ELRKRSDVMDNSESHFVP) are Lumenal-facing. Residues 62-80 (NSLIGVGVLSCVFNSLAGK) traverse the membrane as a helical segment. Topologically, residues 81-99 (ICYDALDPAKYAKWKPWLK) are cytoplasmic. The helical transmembrane segment at 100-123 (LYLAVCVFFNVILFLVALCCFLLR) threads the bilayer. The Lumenal segment spans residues 124–264 (GSLESTLAYG…LNYYSSLMNS (141 aa)). Residue Asn-229 is glycosylated (N-linked (GlcNAc...) asparagine). A helical transmembrane segment spans residues 265-290 (MGVVTLLIWLFEVSITAGLRFLHTAL). At 291-346 (ESVSNPEDPECESEGWLLENSVSETWKAFLESFKKLGKSNQVEAEAADAGQAPEAG) the chain is on the cytoplasmic side. The interval 341 to 346 (QAPEAG) is interaction with MREG.

Belongs to the PRPH2/ROM1 family. Homodimer; disulfide-linked. Forms a homotetramer. Forms a heterotetramer with ROM1. Homotetramer and heterotetramer core complexes go on to form higher order complexes by formation of intermolecular disulfide bonds. Interacts with MREG. Interacts with STX3. Interacts with SNAP25. As to expression, retina (photoreceptor). In rim region of ROS (rod outer segment) disks.

The protein resides in the membrane. It is found in the cell projection. It localises to the cilium. Its subcellular location is the photoreceptor outer segment. The protein localises to the photoreceptor inner segment. In terms of biological role, essential for retina photoreceptor outer segment disk morphogenesis, may also play a role with ROM1 in the maintenance of outer segment disk structure. Required for the maintenance of retinal outer nuclear layer thickness. Required for the correct development and organization of the photoreceptor inner segment. The chain is Peripherin-2 (Prph2) from Rattus norvegicus (Rat).